A 382-amino-acid chain; its full sequence is Anhydro-N-acetylmuramic acid kinase (382 aa).

9 to 16 (GTSLDGID) is a binding site for ATP.

It belongs to the anhydro-N-acetylmuramic acid kinase family.

The enzyme catalyses 1,6-anhydro-N-acetyl-beta-muramate + ATP + H2O = N-acetyl-D-muramate 6-phosphate + ADP + H(+). It participates in amino-sugar metabolism; 1,6-anhydro-N-acetylmuramate degradation. The protein operates within cell wall biogenesis; peptidoglycan recycling. Functionally, catalyzes the specific phosphorylation of 1,6-anhydro-N-acetylmuramic acid (anhMurNAc) with the simultaneous cleavage of the 1,6-anhydro ring, generating MurNAc-6-P. Is required for the utilization of anhMurNAc either imported from the medium or derived from its own cell wall murein, and thus plays a role in cell wall recycling. This Bacillus anthracis (strain A0248) protein is Anhydro-N-acetylmuramic acid kinase.